The primary structure comprises 796 residues: Leucine--tRNA ligase (796 aa).

Residues 40–51 (PYPSASGLHVGH) carry the 'HIGH' region motif. The 'KMSKS' region motif lies at 569–573 (KMSKS). Lys-572 contacts ATP.

The protein belongs to the class-I aminoacyl-tRNA synthetase family.

The protein resides in the cytoplasm. The enzyme catalyses tRNA(Leu) + L-leucine + ATP = L-leucyl-tRNA(Leu) + AMP + diphosphate. In Bdellovibrio bacteriovorus (strain ATCC 15356 / DSM 50701 / NCIMB 9529 / HD100), this protein is Leucine--tRNA ligase.